The following is a 460-amino-acid chain: Kynurenine 3-monooxygenase (460 aa).

It belongs to the aromatic-ring hydroxylase family. KMO subfamily. FAD serves as cofactor.

Its subcellular location is the mitochondrion. It carries out the reaction L-kynurenine + NADPH + O2 + H(+) = 3-hydroxy-L-kynurenine + NADP(+) + H2O. It functions in the pathway cofactor biosynthesis; NAD(+) biosynthesis; quinolinate from L-kynurenine: step 1/3. Catalyzes the hydroxylation of L-kynurenine (L-Kyn) to form 3-hydroxy-L-kynurenine (L-3OHKyn). Required for synthesis of quinolinic acid. The sequence is that of Kynurenine 3-monooxygenase from Dictyostelium discoideum (Social amoeba).